A 71-amino-acid polypeptide reads, in one-letter code: MSLSNEEMISNIRQKLNIVNQALFNPEKFKSTPHQDISEIYEFVMSKDSFSPSEVTAIADHLGQLRQDMED.

Belongs to the UPF0435 family.

This is UPF0435 protein SERP1418 from Staphylococcus epidermidis (strain ATCC 35984 / DSM 28319 / BCRC 17069 / CCUG 31568 / BM 3577 / RP62A).